The primary structure comprises 393 residues: MTQIGTPLSPTATRVLFCGSGELGKEVVIELQRLGVEVIAVDRYENAPAMQVAHRSHVINMLDGAALRAVIEAEKPHFIVPEIEAIATATLVELEAEGFTVIPTARAAQLTMNREGIRRLAAEELKLPTSPYHFADTFEAYSKAVEDLGFPCVVKPVMSSSGKGQSLLKSTDDVQKAWDYAQEGGRAGKGRVIVEGFIDFDYEITLLTVRHIGGTTFCAPVGHRQEKGDYQESWQPQAMSPVALAESERVAKAVTEALGGRGMFGVELFIKGDQVWFSEVSPRPHDTGLVTLISQDLSQFALHARAILGLPIPLIRQFGPSASAVILVEGQSTQTAFANLGAALAEPDTALRLFGKPEVNGQRRMGVALARDESIEAARAKATRASQAVNVEL.

N(1)-(5-phospho-beta-D-ribosyl)glycinamide is bound by residues 22–23 (EL) and Glu-82. ATP-binding positions include Arg-114, Lys-155, 160 to 165 (SSGKGQ), 195 to 198 (EGFI), and Glu-203. Positions 119-308 (RLAAEELKLP…QFALHARAIL (190 aa)) constitute an ATP-grasp domain. 2 residues coordinate Mg(2+): Glu-267 and Glu-279. Residues Asp-286, Lys-356, and 363-364 (RR) each bind N(1)-(5-phospho-beta-D-ribosyl)glycinamide.

The protein belongs to the PurK/PurT family. As to quaternary structure, homodimer.

The catalysed reaction is N(1)-(5-phospho-beta-D-ribosyl)glycinamide + formate + ATP = N(2)-formyl-N(1)-(5-phospho-beta-D-ribosyl)glycinamide + ADP + phosphate + H(+). Its pathway is purine metabolism; IMP biosynthesis via de novo pathway; N(2)-formyl-N(1)-(5-phospho-D-ribosyl)glycinamide from N(1)-(5-phospho-D-ribosyl)glycinamide (formate route): step 1/1. Involved in the de novo purine biosynthesis. Catalyzes the transfer of formate to 5-phospho-ribosyl-glycinamide (GAR), producing 5-phospho-ribosyl-N-formylglycinamide (FGAR). Formate is provided by PurU via hydrolysis of 10-formyl-tetrahydrofolate. In Pseudomonas syringae pv. syringae (strain B728a), this protein is Formate-dependent phosphoribosylglycinamide formyltransferase.